The primary structure comprises 1072 residues: Teashirt homolog 3 (1072 aa).

Disordered stretches follow at residues 44-71 (ACPS…SETS), 130-153 (PSSE…CGSG), and 228-247 (HYRD…WSKP). Residues 57–71 (SSHEMDSESHISETS) show a composition bias toward basic and acidic residues. 2 C2H2-type zinc fingers span residues 204–228 (FRCK…ETGH) and 265–289 (LKCM…KTKH). A compositionally biased stretch (basic and acidic residues) spans 228–237 (HYRDDNHETD). Positions 315 to 336 (SLELELPSSPDSTGGTPKATLS) are disordered. The C2H2-type 3; atypical zinc-finger motif lies at 376-400 (LKCMECGSSHDTLQELTAHMMVTGH). A compositionally biased stretch (basic and acidic residues) spans 469–481 (AVLDEKPKEKEKA). Disordered regions lie at residues 469-489 (AVLD…EKYD), 569-594 (NSEI…PMPK), 616-690 (EKMK…PLSG), 784-815 (TKGK…TVTT), and 846-888 (TESH…RQSN). Composition is skewed to polar residues over residues 571 to 593 (EIVS…SPMP) and 649 to 660 (SSGSGFKSQENS). The residue at position 672 (Ser-672) is a Phosphoserine. 2 stretches are compositionally biased toward low complexity: residues 791 to 815 (GCSL…TVTT) and 847 to 860 (ESHT…SSIS). The segment at residues 882 to 952 (RKGRQSNWNP…NVKYQLRRTG (71 aa)) is a DNA-binding region (homeobox; atypical). C2H2-type zinc fingers lie at residues 967-989 (FFCN…LESH) and 1032-1055 (YQCK…SKTH).

It belongs to the teashirt C2H2-type zinc-finger protein family. In terms of assembly, interacts (via N-terminus) with HDAC1 and HDAC2; the interaction is direct. Found in a trimeric complex with APBB1 and HDAC1; the interaction between HDAC1 and APBB1 is mediated by TSHZ3. Interacts (via homeobox domain) with APBB1 (via PID domain 1). Expressed in cortical neurons.

It localises to the nucleus. The protein resides in the cell projection. It is found in the growth cone. Functionally, transcriptional regulator involved in developmental processes. Functions in association with APBB1, SET and HDAC factors as a transcriptional repressor, that inhibits the expression of CASP4. TSHZ3-mediated transcription repression involves the recruitment of histone deacetylases HDAC1 and HDAC2. Associates with chromatin in a region surrounding the CASP4 transcriptional start site(s). Regulates the development of neurons involved in both respiratory rhythm and airflow control. Promotes maintenance of nucleus ambiguus (nA) motoneurons, which govern upper airway function, and establishes a respiratory rhythm generator (RRG) activity compatible with survival at birth. Involved in the differentiation of the proximal uretic smooth muscle cells during developmental processes. Involved in the up-regulation of myocardin, that directs the expression of smooth muscle cells in the proximal ureter. Involved in the modulation of glutamatergic synaptic transmission and long-term synaptic potentiation. The protein is Teashirt homolog 3 (Tshz3) of Rattus norvegicus (Rat).